We begin with the raw amino-acid sequence, 286 residues long: Ribosomal RNA small subunit methyltransferase A (286 aa).

The S-adenosyl-L-methionine site is built by Asn-33, Val-35, Gly-60, Glu-81, Asp-111, and Asn-129.

Belongs to the class I-like SAM-binding methyltransferase superfamily. rRNA adenine N(6)-methyltransferase family. RsmA subfamily.

The protein resides in the cytoplasm. The enzyme catalyses adenosine(1518)/adenosine(1519) in 16S rRNA + 4 S-adenosyl-L-methionine = N(6)-dimethyladenosine(1518)/N(6)-dimethyladenosine(1519) in 16S rRNA + 4 S-adenosyl-L-homocysteine + 4 H(+). Functionally, specifically dimethylates two adjacent adenosines (A1518 and A1519) in the loop of a conserved hairpin near the 3'-end of 16S rRNA in the 30S particle. May play a critical role in biogenesis of 30S subunits. This is Ribosomal RNA small subunit methyltransferase A from Streptomyces coelicolor (strain ATCC BAA-471 / A3(2) / M145).